The primary structure comprises 308 residues: Beta-carotene hydroxylase 2, chloroplastic (308 aa).

The transit peptide at 1 to 59 (MAAARISFSSTSRTSYYRHSPFLGPKPTPTTPSVYPITPFSPNLGSILRCRRRPSFTVC) directs the protein to the chloroplast. The next 2 membrane-spanning stretches (helical) occupy residues 105 to 125 (YLVA…MAVY) and 139 to 159 (FSEM…MEFW). Residues 152–279 (AAVGMEFWAR…KFNGVPYGLF (128 aa)) enclose the Fatty acid hydroxylase domain. Positions 164–169 (HKALWH) match the Histidine box-1 motif. A Histidine box-2 motif is present at residues 176 to 180 (HESHH). The next 2 helical transmembrane spans lie at 191–211 (DVFA…GFFH) and 215–235 (IPGL…AYMF). The short motif at 237–242 (HDGLVH) is the Histidine box-3 element. Positions 263 to 267 (HSLHH) match the Histidine box-4 motif.

It belongs to the sterol desaturase family.

The protein localises to the plastid. It localises to the chloroplast membrane. The enzyme catalyses all-trans-beta-carotene + 4 reduced [2Fe-2S]-[ferredoxin] + 2 O2 + 4 H(+) = all-trans-zeaxanthin + 4 oxidized [2Fe-2S]-[ferredoxin] + 2 H2O. It catalyses the reaction all-trans-beta-carotene + 2 reduced [2Fe-2S]-[ferredoxin] + O2 + 2 H(+) = beta-cryptoxanthin + 2 oxidized [2Fe-2S]-[ferredoxin] + H2O. It carries out the reaction beta-cryptoxanthin + 2 reduced [2Fe-2S]-[ferredoxin] + O2 + 2 H(+) = all-trans-zeaxanthin + 2 oxidized [2Fe-2S]-[ferredoxin] + H2O. With respect to regulation, inhibited by o-phenanthroline and 8-hydroxyquinoline. Nonheme diiron monooxygenase involved in the biosynthesis of xanthophylls. Specific for beta-ring hydroxylations of beta-carotene. Produces beta-cryptoxanthin and zeaxanthin. Uses ferredoxin as an electron donor. In Capsicum annuum (Capsicum pepper), this protein is Beta-carotene hydroxylase 2, chloroplastic.